The primary structure comprises 369 residues: uncharacterized protein (369 aa).

This is an uncharacterized protein from Haloarcula marismortui (strain ATCC 43049 / DSM 3752 / JCM 8966 / VKM B-1809) (Halobacterium marismortui).